The primary structure comprises 661 residues: UvrABC system protein B (661 aa).

A Helicase ATP-binding domain is found at 25–178 (EGILKGEKFQ…DEVIRELIRM (154 aa)). 38 to 45 (GVTGSGKT) contacts ATP. Residues 91-114 (YYDYYQPEAYIPETDTYIEKDSSI) carry the Beta-hairpin motif. The 163-residue stretch at 429-591 (QIDHLIGEIR…IVPQTVRKGI (163 aa)) folds into the Helicase C-terminal domain. In terms of domain architecture, UVR spans 625–660 (EEYIKELEQQMKRFAIELEFEKAAKIRDKIFELKKL).

This sequence belongs to the UvrB family. As to quaternary structure, forms a heterotetramer with UvrA during the search for lesions. Interacts with UvrC in an incision complex.

It is found in the cytoplasm. In terms of biological role, the UvrABC repair system catalyzes the recognition and processing of DNA lesions. A damage recognition complex composed of 2 UvrA and 2 UvrB subunits scans DNA for abnormalities. Upon binding of the UvrA(2)B(2) complex to a putative damaged site, the DNA wraps around one UvrB monomer. DNA wrap is dependent on ATP binding by UvrB and probably causes local melting of the DNA helix, facilitating insertion of UvrB beta-hairpin between the DNA strands. Then UvrB probes one DNA strand for the presence of a lesion. If a lesion is found the UvrA subunits dissociate and the UvrB-DNA preincision complex is formed. This complex is subsequently bound by UvrC and the second UvrB is released. If no lesion is found, the DNA wraps around the other UvrB subunit that will check the other stand for damage. The chain is UvrABC system protein B from Caldicellulosiruptor saccharolyticus (strain ATCC 43494 / DSM 8903 / Tp8T 6331).